A 382-amino-acid chain; its full sequence is Sphingoid long-chain base transporter RSB1 (382 aa).

Over M1–R34 the chain is Extracellular. Residues N3 and N6 are each glycosylated (N-linked (GlcNAc...) asparagine). A helical transmembrane segment spans residues F35–L55. Topologically, residues M56–R57 are cytoplasmic. Residues Q58–G78 traverse the membrane as a helical segment. The Extracellular portion of the chain corresponds to R79–D90. Residues A91 to Y111 form a helical membrane-spanning segment. The Cytoplasmic segment spans residues Y112–S135. A helical transmembrane segment spans residues F136 to C156. Over G157 to H171 the chain is Extracellular. Residues V172–F192 traverse the membrane as a helical segment. Topologically, residues H193–R241 are cytoplasmic. A helical membrane pass occupies residues W242–C262. The Extracellular portion of the chain corresponds to C263–E281. Residues W282–F302 form a helical membrane-spanning segment. At H303–L382 the chain is on the cytoplasmic side.

It belongs to the lipid-translocating exporter (LTE) (TC 9.A.26.1) family.

Its subcellular location is the cell membrane. In terms of biological role, catalyzes the ATP-dependent translocation of sphingoid long-chain bases (LCBs) from the cytoplasmic site toward the extracytoplasmic side of the membrane (flip-flop). Involved in the establishment of the functional lipid asymmetry of the plasma membrane. Regulates intracellular levels of LCBs, sphingolipid precursors that are growth inhibitory at increased levels. This is Sphingoid long-chain base transporter RSB1 (RSB1) from Saccharomyces cerevisiae (strain Lalvin EC1118 / Prise de mousse) (Baker's yeast).